The chain runs to 201 residues: Probable chemoreceptor glutamine deamidase CheD 1 (201 aa).

It belongs to the CheD family.

It catalyses the reaction L-glutaminyl-[protein] + H2O = L-glutamyl-[protein] + NH4(+). Its function is as follows. Probably deamidates glutamine residues to glutamate on methyl-accepting chemotaxis receptors (MCPs), playing an important role in chemotaxis. The protein is Probable chemoreceptor glutamine deamidase CheD 1 of Dechloromonas aromatica (strain RCB).